The sequence spans 672 residues: Nuclear RNA export factor 1 (672 aa).

2 disordered regions span residues 1–52 and 73–101; these read MPKR…SFKP and DEDD…IPRG. Basic residues predominate over residues 40 to 49; the sequence is RKDRNKRRVS. In terms of domain architecture, RRM spans 113-193; sequence WYQVTLQNAQ…PRVRSGIPLV (81 aa). 4 LRR repeats span residues 255 to 280, 281 to 304, 305 to 332, and 333 to 360; these read DLEA…KRLP, NLKI…LRNL, SILE…EVRR, and KFPK…GRLL. The NTF2 domain maps to 375–529; the sequence is VVRQFLDQYF…FCIRNETIFI (155 aa). The disordered stretch occupies residues 541-564; it reads KRSQHQPAPGAMPSTSSAVTSPQA. Over residues 553 to 563 the composition is skewed to polar residues; it reads PSTSSAVTSPQ. Residue S561 is modified to Phosphoserine. Residues 618-672 enclose the TAP-C domain; that stretch reads STKMQMIEAMSAQSQMNVIWSRKCLEETNWDFNHAAFVFEKLFKENKIPPEAFMK.

The protein belongs to the NXF family. As to quaternary structure, interacts with Nxt1. Interacts with ZC3H3. Forms a complex with Nup358/RanBP2, RanGAP and Nxt1. Interacts with Nup54 and Nup58. Interacts with Orc3 and Hpr1. Expressed ubiquitously.

The protein localises to the nucleus. Its subcellular location is the nucleoplasm. It localises to the cytoplasm. The protein resides in the nucleus envelope. Its function is as follows. Mediates the export of the majority of mRNAs from the nucleus to the cytoplasm. In ovarian follicle cells, plays a role in transposable element silencing regulation by enabling the nuclear export of flamenco (flam) transcripts and subsequent piRNA biogenesis. This chain is Nuclear RNA export factor 1, found in Drosophila melanogaster (Fruit fly).